The following is a 229-amino-acid chain: Transmembrane emp24 domain-containing protein 5 (229 aa).

The N-terminal stretch at 1-27 is a signal peptide; sequence MGGRMWLPFPVLLLSALPAALLRGAAG. At 28–196 the chain is on the lumenal side; that stretch reads FTPSLDSDFT…IQESNFDRVN (169 aa). The region spanning 45–126 is the GOLD domain; that stretch reads KECFYQPMPL…EKVIFFELIL (82 aa). The helical transmembrane segment at 197–217 threads the bilayer; sequence FWSVVNLMVMVVVSAIQVYTL. Over 218-229 the chain is Cytoplasmic; it reads KSLFEDKRKSRT.

It belongs to the EMP24/GP25L family. Interacts with TMED9 and TMED10.

Its subcellular location is the endoplasmic reticulum membrane. The protein resides in the golgi apparatus. It is found in the cis-Golgi network membrane. It localises to the endoplasmic reticulum-Golgi intermediate compartment membrane. Its function is as follows. Potential role in vesicular protein trafficking, mainly in the early secretory pathway. Required for the maintenance of the Golgi apparatus; involved in protein exchange between Golgi stacks during assembly. Probably not required for COPI-vesicle-mediated retrograde transport. The chain is Transmembrane emp24 domain-containing protein 5 (Tmed5) from Mus musculus (Mouse).